The chain runs to 33 residues: Beta-theraphotoxin-Cm1a (33 aa).

Cystine bridges form between C2-C17, C9-C22, and C16-C29. L33 is subject to Leucine amide.

This sequence belongs to the neurotoxin 10 (Hwtx-1) family. 04 (CcoTx1) subfamily. Expressed by the venom gland.

The protein resides in the secreted. In terms of biological role, inhibits many voltage-gated sodium channels and one voltage-gated calcium channel (Cav2.2/CACNA1B (IC(50)=400 nM), Nav1.2/SCN2A (IC(50)=3-70 nM), Nav1.1/SCN1A (IC(50)=523-1060 nM), Nav1.7/SCN9A (IC(50)=129.1-5120 nM), Nav1.4/SCN4A (IC(50)=263-888 nM or &gt;10 uM) and Nav1.5/SCN5A (IC(50)=188-323 nM or &gt;10 uM)). It acts by shifting the voltage dependence of channel activation to more depolarized potentials and by blocking the inward component of the sodium current. It shows moderate affinity for lipid bilayers. On Nav1.7/SCN9A, it has been shown to interact with the S3-S4 loop of domain DII (site 4). Is significantly more potent against Nav1.2/SCN2A than the other Nav channel subtypes. In vivo, this toxin causes general ataxia, lack of response to stimuli, and semiparalysis. After a few minutes, the mice are unable to stand, and breathing is reduced in rhythm and intensity. Symptoms gradually increase with progressive slowing of breathing and flaccid paralysis, death occurred within 10 to 20 minutes post injection. Animals remain totally flaccid, and no symptoms of excitatory neurotoxicity are observed. This Ceratogyrus marshalli (Straighthorned baboon tarantula) protein is Beta-theraphotoxin-Cm1a.